Here is a 428-residue protein sequence, read N- to C-terminus: Light-independent protochlorophyllide reductase subunit N (428 aa).

The [4Fe-4S] cluster site is built by Cys29, Cys54, and Cys115.

It belongs to the BchN/ChlN family. Protochlorophyllide reductase is composed of three subunits; BchL, BchN and BchB. Forms a heterotetramer of two BchB and two BchN subunits. The cofactor is [4Fe-4S] cluster.

The catalysed reaction is chlorophyllide a + oxidized 2[4Fe-4S]-[ferredoxin] + 2 ADP + 2 phosphate = protochlorophyllide a + reduced 2[4Fe-4S]-[ferredoxin] + 2 ATP + 2 H2O. The protein operates within porphyrin-containing compound metabolism; bacteriochlorophyll biosynthesis (light-independent). Component of the dark-operative protochlorophyllide reductase (DPOR) that uses Mg-ATP and reduced ferredoxin to reduce ring D of protochlorophyllide (Pchlide) to form chlorophyllide a (Chlide). This reaction is light-independent. The NB-protein (BchN-BchB) is the catalytic component of the complex. This is Light-independent protochlorophyllide reductase subunit N from Cereibacter sphaeroides (strain ATCC 17029 / ATH 2.4.9) (Rhodobacter sphaeroides).